Consider the following 130-residue polypeptide: uncharacterized protein (130 aa).

Disordered regions lie at residues M1 to T47 and Q78 to S130. A compositionally biased stretch (polar residues) spans Q13 to S33. A compositionally biased stretch (basic residues) spans P86–T110. The span at S117–S130 shows a compositional bias: basic and acidic residues.

This is an uncharacterized protein from Torque teno mini virus 1 (isolate TLMV-CBD279).